We begin with the raw amino-acid sequence, 151 residues long: Large ribosomal subunit protein uL13 (151 aa).

It belongs to the universal ribosomal protein uL13 family. Part of the 50S ribosomal subunit.

This protein is one of the early assembly proteins of the 50S ribosomal subunit, although it is not seen to bind rRNA by itself. It is important during the early stages of 50S assembly. The protein is Large ribosomal subunit protein uL13 of Synechococcus elongatus (strain ATCC 33912 / PCC 7942 / FACHB-805) (Anacystis nidulans R2).